Consider the following 156-residue polypeptide: Phosphopantetheine adenylyltransferase (156 aa).

Position 10 (T10) interacts with substrate. Residues 10 to 11 (TF) and H18 contribute to the ATP site. Residues K42, L74, and R88 each contribute to the substrate site. ATP is bound by residues 89–91 (GLR), E99, and 124–130 (NAFISSS).

This sequence belongs to the bacterial CoaD family. As to quaternary structure, homohexamer. It depends on Mg(2+) as a cofactor.

The protein resides in the cytoplasm. The enzyme catalyses (R)-4'-phosphopantetheine + ATP + H(+) = 3'-dephospho-CoA + diphosphate. The protein operates within cofactor biosynthesis; coenzyme A biosynthesis; CoA from (R)-pantothenate: step 4/5. Functionally, reversibly transfers an adenylyl group from ATP to 4'-phosphopantetheine, yielding dephospho-CoA (dPCoA) and pyrophosphate. The polypeptide is Phosphopantetheine adenylyltransferase (Campylobacter concisus (strain 13826)).